The primary structure comprises 67 residues: Probable Sec-independent protein translocase protein TatE (67 aa).

The chain crosses the membrane as a helical span at residues 1–21 (MGEISITKLLVVAALVVLLFG). Residues 45–67 (DEDAGAKKDANGDLPAEKLTHKE) form a disordered region.

This sequence belongs to the TatA/E family. TatE subfamily.

It is found in the cell inner membrane. Part of the twin-arginine translocation (Tat) system that transports large folded proteins containing a characteristic twin-arginine motif in their signal peptide across membranes. TatE shares overlapping functions with TatA. The protein is Probable Sec-independent protein translocase protein TatE of Escherichia fergusonii (strain ATCC 35469 / DSM 13698 / CCUG 18766 / IAM 14443 / JCM 21226 / LMG 7866 / NBRC 102419 / NCTC 12128 / CDC 0568-73).